The chain runs to 318 residues: Peptidyl-prolyl cis-trans isomerase CPR4 (318 aa).

Positions 1–20 are cleaved as a signal peptide; that stretch reads MWLKSLLLCLYSLVLCQVHA. Residues 55 to 225 enclose the PPIase cyclophilin-type domain; sequence YFDPVSKSMK…HELRFLYFVL (171 aa). N-linked (GlcNAc...) asparagine glycosylation occurs at N166. A helical membrane pass occupies residues 286 to 303; it reads ISRALMCLTVLGLCFIAY.

It is found in the membrane. It catalyses the reaction [protein]-peptidylproline (omega=180) = [protein]-peptidylproline (omega=0). Functionally, PPIases accelerate the folding of proteins. It catalyzes the cis-trans isomerization of proline imidic peptide bonds in oligopeptides. This is Peptidyl-prolyl cis-trans isomerase CPR4 (CPR4) from Saccharomyces cerevisiae (strain ATCC 204508 / S288c) (Baker's yeast).